The following is a 376-amino-acid chain: ATP phosphoribosyltransferase regulatory subunit (376 aa).

This sequence belongs to the class-II aminoacyl-tRNA synthetase family. HisZ subfamily. In terms of assembly, heteromultimer composed of HisG and HisZ subunits.

It localises to the cytoplasm. It participates in amino-acid biosynthesis; L-histidine biosynthesis; L-histidine from 5-phospho-alpha-D-ribose 1-diphosphate: step 1/9. In terms of biological role, required for the first step of histidine biosynthesis. May allow the feedback regulation of ATP phosphoribosyltransferase activity by histidine. This chain is ATP phosphoribosyltransferase regulatory subunit, found in Brucella anthropi (strain ATCC 49188 / DSM 6882 / CCUG 24695 / JCM 21032 / LMG 3331 / NBRC 15819 / NCTC 12168 / Alc 37) (Ochrobactrum anthropi).